Reading from the N-terminus, the 159-residue chain is Ribosomal RNA large subunit methyltransferase H (159 aa).

S-adenosyl-L-methionine-binding positions include L76, G108, and 127–132 (FSKMTL).

The protein belongs to the RNA methyltransferase RlmH family. As to quaternary structure, homodimer.

The protein resides in the cytoplasm. It carries out the reaction pseudouridine(1915) in 23S rRNA + S-adenosyl-L-methionine = N(3)-methylpseudouridine(1915) in 23S rRNA + S-adenosyl-L-homocysteine + H(+). Functionally, specifically methylates the pseudouridine at position 1915 (m3Psi1915) in 23S rRNA. The polypeptide is Ribosomal RNA large subunit methyltransferase H (Bacillus anthracis (strain CDC 684 / NRRL 3495)).